We begin with the raw amino-acid sequence, 419 residues long: Nodulation protein NoeE (419 aa).

Required for the formation of sulfated nod factor. Proposed to transfer activated sulfate (PAPS) to the fucose of the nod factor. In Sinorhizobium fredii (strain NBRC 101917 / NGR234), this protein is Nodulation protein NoeE (noeE).